A 427-amino-acid chain; its full sequence is Probable WRKY transcription factor 35 (427 aa).

2 disordered regions span residues 1-45 and 266-336; these read MDNF…DLHV and YTSE…HPPF. A compositionally biased stretch (pro residues) spans 23–40; sequence SPGPPEGPSPSSMSPPPT. The segment at residues 209–275 is a DNA-binding region (WRKY); it reads SGEVVPSDLW…YTSEHNHPWP (67 aa). Residues 284-310 are compositionally biased toward low complexity; sequence STRSSSSSSLNPSSKSSTAAATTSPSS. The segment covering 311-333 has biased composition (polar residues); the sequence is RVFQNNSSKDEPNNSNLPSSSTH.

It belongs to the WRKY group II-e family.

The protein localises to the nucleus. Its function is as follows. Transcription factor. Interacts specifically with the W box (5'-(T)TGAC[CT]-3'), a frequently occurring elicitor-responsive cis-acting element. The protein is Probable WRKY transcription factor 35 (WRKY35) of Arabidopsis thaliana (Mouse-ear cress).